Reading from the N-terminus, the 324-residue chain is Protoheme IX farnesyltransferase (324 aa).

A run of 9 helical transmembrane segments spans residues 31 to 51 (LIVLFLITTAAGMWVAARGEV), 53 to 73 (PVLALITLLTGAMAAGSANTI), 104 to 124 (LVFAIALAVGAFSLQTLCANL), 125 to 145 (LSACLEMAGIAVYVGVYTHWL), 153 to 173 (IVIGGAAGAIPPLVGWAAVTG), 181 to 201 (VLFAIIFIWTPPHFWPLAMLI), 222 to 242 (TAWQIFGYTLVLLPTTLLLVY), 243 to 263 (PLHACGLIYGAIALVLGVVFI), and 285 to 305 (FSILYMMILCAAMGIDSLPLT).

Belongs to the UbiA prenyltransferase family. Protoheme IX farnesyltransferase subfamily.

The protein resides in the cell inner membrane. It catalyses the reaction heme b + (2E,6E)-farnesyl diphosphate + H2O = Fe(II)-heme o + diphosphate. The protein operates within porphyrin-containing compound metabolism; heme O biosynthesis; heme O from protoheme: step 1/1. Converts heme B (protoheme IX) to heme O by substitution of the vinyl group on carbon 2 of heme B porphyrin ring with a hydroxyethyl farnesyl side group. This chain is Protoheme IX farnesyltransferase, found in Cyanothece sp. (strain PCC 7425 / ATCC 29141).